A 241-amino-acid polypeptide reads, in one-letter code: Biosynthetic peptidoglycan transglycosylase (241 aa).

A helical membrane pass occupies residues 18–38 (GVIGIIALWMAGILIFAFLPV).

It belongs to the glycosyltransferase 51 family.

The protein resides in the cell inner membrane. The catalysed reaction is [GlcNAc-(1-&gt;4)-Mur2Ac(oyl-L-Ala-gamma-D-Glu-L-Lys-D-Ala-D-Ala)](n)-di-trans,octa-cis-undecaprenyl diphosphate + beta-D-GlcNAc-(1-&gt;4)-Mur2Ac(oyl-L-Ala-gamma-D-Glu-L-Lys-D-Ala-D-Ala)-di-trans,octa-cis-undecaprenyl diphosphate = [GlcNAc-(1-&gt;4)-Mur2Ac(oyl-L-Ala-gamma-D-Glu-L-Lys-D-Ala-D-Ala)](n+1)-di-trans,octa-cis-undecaprenyl diphosphate + di-trans,octa-cis-undecaprenyl diphosphate + H(+). It functions in the pathway cell wall biogenesis; peptidoglycan biosynthesis. In terms of biological role, peptidoglycan polymerase that catalyzes glycan chain elongation from lipid-linked precursors. In Yersinia pestis bv. Antiqua (strain Antiqua), this protein is Biosynthetic peptidoglycan transglycosylase.